We begin with the raw amino-acid sequence, 874 residues long: Alanine--tRNA ligase (874 aa).

The Zn(2+) site is built by His564, His568, Cys665, and His669.

Belongs to the class-II aminoacyl-tRNA synthetase family. It depends on Zn(2+) as a cofactor.

The protein resides in the cytoplasm. It catalyses the reaction tRNA(Ala) + L-alanine + ATP = L-alanyl-tRNA(Ala) + AMP + diphosphate. Functionally, catalyzes the attachment of alanine to tRNA(Ala) in a two-step reaction: alanine is first activated by ATP to form Ala-AMP and then transferred to the acceptor end of tRNA(Ala). Also edits incorrectly charged Ser-tRNA(Ala) and Gly-tRNA(Ala) via its editing domain. The protein is Alanine--tRNA ligase of Cupriavidus metallidurans (strain ATCC 43123 / DSM 2839 / NBRC 102507 / CH34) (Ralstonia metallidurans).